A 406-amino-acid polypeptide reads, in one-letter code: Ribose-phosphate pyrophosphokinase 3, mitochondrial (406 aa).

A disordered region spans residues 1–32; that stretch reads MAATPHRHLLQPCKNPAISSSETLKPSSSFSL. The N-terminal 87 residues, 1-87, are a transit peptide targeting the mitochondrion; that stretch reads MAATPHRHLL…RRFQMSSNQE (87 aa). A compositionally biased stretch (low complexity) spans 18–32; the sequence is ISSSETLKPSSSFSL. Residues Asp-226 and His-228 each coordinate Mg(2+). Residues 309–324 are binding of phosphoribosylpyrophosphate; it reads GRHVVIVDDLVQSGGT.

Belongs to the ribose-phosphate pyrophosphokinase family.

The protein resides in the mitochondrion. It carries out the reaction D-ribose 5-phosphate + ATP = 5-phospho-alpha-D-ribose 1-diphosphate + AMP + H(+). The sequence is that of Ribose-phosphate pyrophosphokinase 3, mitochondrial (PRS3) from Spinacia oleracea (Spinach).